The primary structure comprises 138 residues: Ribulose bisphosphate carboxylase small subunit (138 aa).

Belongs to the RuBisCO small chain family. As to quaternary structure, heterohexadecamer of 8 large and 8 small subunits.

The protein localises to the plastid. Its subcellular location is the chloroplast. RuBisCO catalyzes two reactions: the carboxylation of D-ribulose 1,5-bisphosphate, the primary event in carbon dioxide fixation, as well as the oxidative fragmentation of the pentose substrate in the photorespiration process. Both reactions occur simultaneously and in competition at the same active site. Although the small subunit is not catalytic it is essential for maximal activity. The polypeptide is Ribulose bisphosphate carboxylase small subunit (Porphyra purpurea (Red seaweed)).